We begin with the raw amino-acid sequence, 346 residues long: MSKRCASDRDDKDSEPVKKPRFSIANILDEVEDEEDVEVDVEDVDDVDLSSIPSKSPERSRGRPKIGLKMKEGNLPIECKLEGSELWAKFFDLGTEMIITKSGRRMFPTVKVSFTNVILDALYYIFLDVVPVDSKRYRYIYNKSAWLTAGKAEPVPKNRYYLHPDSPFTGDQLLKHVISFEKTKLTNNEVDKTGHLILNSMHKYQPRIHIVQRQKANPLDPNKVVMSEEKHCTYTFPETQFMAVTAYQNQLITKLKIEKNPFAKGFRDPTGRSPDEMERSPGDMMLSNFYHSSALQQAMFQQCLSKTLQLNPSIMMLYQNVFPTGNSLPAAPTVPGNPAEISIKSE.

Acidic residues predominate over residues 33 to 48 (DEEDVEVDVEDVDDVD). A disordered region spans residues 33–66 (DEEDVEVDVEDVDDVDLSSIPSKSPERSRGRPKI). The T-box DNA-binding region spans 86–268 (LWAKFFDLGT…KNPFAKGFRD (183 aa)).

It is found in the nucleus. Functionally, transcription factor. Involved in cell fate determination; required to pattern the posterior hindgut. Involved in motor neuron fate determination and maintenance, acting as a transcriptional repressor to counteract gene activation by transcription factor unc-3 in a subset of motor neurons. Required throughout development to repress transcription by unc-3, probably acting by binding to specific promoter elements. Represses expression of VA and VB motor neuron-specific effector genes, such as DEG/ENaC channel del-1 and the innexin inx-12, in DA and DB motor neurons. Represses expression of transcription factor bnc-1, perhaps acting directly, in DA and DB motor neurons. The polypeptide is T-box protein 12 (mab-9) (Caenorhabditis elegans).